The sequence spans 236 residues: Phosphoribosylaminoimidazole-succinocarboxamide synthase (236 aa).

Belongs to the SAICAR synthetase family.

It carries out the reaction 5-amino-1-(5-phospho-D-ribosyl)imidazole-4-carboxylate + L-aspartate + ATP = (2S)-2-[5-amino-1-(5-phospho-beta-D-ribosyl)imidazole-4-carboxamido]succinate + ADP + phosphate + 2 H(+). The protein operates within purine metabolism; IMP biosynthesis via de novo pathway; 5-amino-1-(5-phospho-D-ribosyl)imidazole-4-carboxamide from 5-amino-1-(5-phospho-D-ribosyl)imidazole-4-carboxylate: step 1/2. This chain is Phosphoribosylaminoimidazole-succinocarboxamide synthase, found in Campylobacter jejuni subsp. jejuni serotype O:2 (strain ATCC 700819 / NCTC 11168).